The chain runs to 277 residues: Thiazole synthase (277 aa).

The Schiff-base intermediate with DXP role is filled by lysine 118. 1-deoxy-D-xylulose 5-phosphate-binding positions include glycine 179, 205–206 (AG), and 227–228 (NT).

The protein belongs to the ThiG family. Homotetramer. Forms heterodimers with either ThiH or ThiS.

It is found in the plastid. It localises to the chloroplast. The catalysed reaction is [ThiS sulfur-carrier protein]-C-terminal-Gly-aminoethanethioate + 2-iminoacetate + 1-deoxy-D-xylulose 5-phosphate = [ThiS sulfur-carrier protein]-C-terminal Gly-Gly + 2-[(2R,5Z)-2-carboxy-4-methylthiazol-5(2H)-ylidene]ethyl phosphate + 2 H2O + H(+). Its pathway is cofactor biosynthesis; thiamine diphosphate biosynthesis. Its function is as follows. Catalyzes the rearrangement of 1-deoxy-D-xylulose 5-phosphate (DXP) to produce the thiazole phosphate moiety of thiamine. Sulfur is provided by the thiocarboxylate moiety of the carrier protein ThiS. In vitro, sulfur can be provided by H(2)S. This chain is Thiazole synthase, found in Emiliania huxleyi (Coccolithophore).